The chain runs to 349 residues: Fructose-1,6-bisphosphatase class 1 (349 aa).

Mg(2+) contacts are provided by Glu113, Asp135, Ile137, and Asp138. Substrate is bound by residues 138–141 (DGSS), Asn230, Tyr258, and Lys288. Glu294 lines the Mg(2+) pocket.

This sequence belongs to the FBPase class 1 family. As to quaternary structure, homotetramer. Mg(2+) serves as cofactor.

It is found in the cytoplasm. The catalysed reaction is beta-D-fructose 1,6-bisphosphate + H2O = beta-D-fructose 6-phosphate + phosphate. The protein operates within carbohydrate biosynthesis; Calvin cycle. The sequence is that of Fructose-1,6-bisphosphatase class 1 from Trichormus variabilis (strain ATCC 29413 / PCC 7937) (Anabaena variabilis).